Here is an 810-residue protein sequence, read N- to C-terminus: Volume-regulated anion channel subunit LRRC8A (810 aa).

An N-acetylmethionine modification is found at Met-1. The Cytoplasmic portion of the chain corresponds to 1-22 (MIPVTELRYFADTQPAYRILKP). The helical transmembrane segment at 23–47 (WWDVFTDYISIVMLMIAVFGGTLQV) threads the bilayer. Residues 48-123 (TQDKMICLPC…YENRLHWFAK (76 aa)) are Extracellular-facing. 3 disulfides stabilise this stretch: Cys-54–Cys-310, Cys-57–Cys-65, and Cys-113–Cys-295. Asn-66 and Asn-83 each carry an N-linked (GlcNAc...) asparagine glycan. A helical membrane pass occupies residues 124–142 (YFPYLVLLHTLIFLACSNF). The Cytoplasmic segment spans residues 143–264 (WFKFPRTSSK…EEGDIVYRLY (122 aa)). Thr-200 carries the phosphothreonine modification. A Phosphoserine modification is found at Ser-202. Residue Thr-215 is modified to Phosphothreonine. Ser-217 is subject to Phosphoserine. A helical membrane pass occupies residues 265–286 (MRQTIIKVIKFALIICYTVYYV). The Extracellular portion of the chain corresponds to 287–316 (HNIKFDVDCTVDIESLTGYRTYRCAHPLAT). A helical membrane pass occupies residues 317-341 (LFKILASFYISLVIFYGLICMYTLW). Topologically, residues 342 to 810 (WMLRRSLKKY…RLWRADKEQA (469 aa)) are cytoplasmic. LRR repeat units lie at residues 411–422 (WTLDKLRQRLTK), 423–445 (NAQDKLELHLFMLSGIPDTVFDL), 447–468 (ELEVLKLELIPDVTIPPSIAQL), 469–492 (TGLKELWLYHTAAKIEAPALAFLR), 493–515 (ENLRALHIKFTDIKEIPLWIYSL), 518–542 (LEELHLTGNLSAENNRYIVIDGLRE), 543–565 (LKRLKVLRLKSNLSKLPQVVTDV), 567–589 (VHLQKLSINNEGTKLIVLNSLKK), 590–613 (MVNLTELELIRCDLERIPHSIFSL), 614–637 (HNLQEIDLKDNNLKTIEEIISFQH), 639–661 (HRLTCLKLWYNHIAYIPIQIGNL), 662–684 (TNLERLYLNRNKIEKIPTQLFYC), 686–707 (KLRYLDLSHNNLTFLPADIGLL), 708–730 (QNLQNLAVTANRIEALPPELFQC), 732–753 (KLRALHLGNNVLQSLPSRVGEL), 754–776 (TNLTQIELRGNRLECLPVELGEC), and 778–801 (LLKRSGLVVEEDLFSTLPPEVKER). Positions 706–707 (LL) match the Di-leucine motif motif.

It belongs to the LRRC8 family. In terms of assembly, heterohexamer; oligomerizes with other LRRC8 proteins (LRRC8B, LRRC8C, LRRC8D and/or LRRC8E) to form a heterohexamer. Can form homohexamers in vitro, but these have lower conductance than heterohexamers. In vivo, the subunit composition may depend primarily on expression levels, and heterooligomeric channels containing various proportions of the different LRRC8 proteins may coexist. Interact with GRB2. Interacts with NOX4; this interaction prevents the ubiquitin-mediated degradation of LRRC8A. In terms of processing, N-glycosylated. In terms of tissue distribution, ubiquitously expressed. High levels detected in the bone marrow; lower levels found in peripheral blood cells. Highly expressed in pancreatic beta cells.

The protein localises to the cell membrane. Its subcellular location is the lysosome membrane. It catalyses the reaction chloride(in) = chloride(out). It carries out the reaction iodide(out) = iodide(in). The catalysed reaction is taurine(out) = taurine(in). The enzyme catalyses L-aspartate(out) = L-aspartate(in). It catalyses the reaction L-glutamate(out) = L-glutamate(in). It carries out the reaction myo-inositol(out) = myo-inositol(in). The catalysed reaction is 2',3'-cGAMP(out) = 2',3'-cGAMP(in). With respect to regulation, inhibited by (4-[(2-butyl-6,7-dichloro-2-cyclopentyl-2,3-dihydro-1-oxo-1H-inden-5-yl)oxy]butanoic acid), which plugs the channel like a cork in a bottle by binding in the extracellular selectivity filter and sterically occluding ion conduction. Lipids may block conduction in closed heterohexameric channels. Its function is as follows. Essential component of the volume-regulated anion channel (VRAC, also named VSOAC channel), an anion channel required to maintain a constant cell volume in response to extracellular or intracellular osmotic changes. The VRAC channel conducts iodide better than chloride and can also conduct organic osmolytes like taurine. Mediates efflux of amino acids, such as aspartate and glutamate, in response to osmotic stress. In complex with LRRC8C or LRRC8E, acts as a transporter of immunoreactive cyclic dinucleotide GMP-AMP (2'-3'-cGAMP), an immune messenger produced in response to DNA virus in the cytosol: mediates both import and export of 2'-3'-cGAMP, thereby promoting transfer of 2'-3'-cGAMP to bystander cells. In contrast, complexes containing LRRC8D inhibit transport of 2'-3'-cGAMP. Required for in vivo channel activity, together with at least one other family member (LRRC8B, LRRC8C, LRRC8D or LRRC8E); channel characteristics depend on the precise subunit composition. Can form functional channels by itself (in vitro). Involved in B-cell development: required for the pro-B cell to pre-B cell transition. Also required for T-cell development. Required for myoblast differentiation: VRAC activity promotes membrane hyperpolarization and regulates insulin-stimulated glucose metabolism and oxygen consumption. Also acts as a regulator of glucose-sensing in pancreatic beta cells: VRAC currents, generated in response to hypotonicity- or glucose-induced beta cell swelling, depolarize cells, thereby causing electrical excitation, leading to increase glucose sensitivity and insulin secretion. Also plays a role in lysosome homeostasis by forming functional lysosomal VRAC channels in response to low cytoplasmic ionic strength condition: lysosomal VRAC channels are necessary for the formation of large lysosome-derived vacuoles, which store and then expel excess water to maintain cytosolic water homeostasis. Acts as a key factor in NLRP3 inflammasome activation by modulating itaconate efflux and mitochondria function. The polypeptide is Volume-regulated anion channel subunit LRRC8A (Mus musculus (Mouse)).